Reading from the N-terminus, the 299-residue chain is NAD kinase 1 (299 aa).

Asp-62 acts as the Proton acceptor in catalysis. NAD(+)-binding positions include 62 to 63, Lys-67, 143 to 144, Lys-173, and Asp-175; these read DG and ND.

It belongs to the NAD kinase family. A divalent metal cation serves as cofactor.

The protein localises to the cytoplasm. It catalyses the reaction NAD(+) + ATP = ADP + NADP(+) + H(+). Involved in the regulation of the intracellular balance of NAD and NADP, and is a key enzyme in the biosynthesis of NADP. Catalyzes specifically the phosphorylation on 2'-hydroxyl of the adenosine moiety of NAD to yield NADP. The chain is NAD kinase 1 from Prochlorococcus marinus subsp. pastoris (strain CCMP1986 / NIES-2087 / MED4).